We begin with the raw amino-acid sequence, 256 residues long: DNA repair protein RecO (256 aa).

The protein belongs to the RecO family.

In terms of biological role, involved in DNA repair and RecF pathway recombination. The polypeptide is DNA repair protein RecO (Rhizobium johnstonii (strain DSM 114642 / LMG 32736 / 3841) (Rhizobium leguminosarum bv. viciae)).